The primary structure comprises 277 residues: Phosphatidylglycerol--prolipoprotein diacylglyceryl transferase (277 aa).

Helical transmembrane passes span 18-38 (ISVK…LLLA), 51-71 (IIVD…RIYY), 89-109 (IWHG…TAII), and 116-136 (ISFW…QAIG). Arg-137 lines the a 1,2-diacyl-sn-glycero-3-phospho-(1'-sn-glycerol) pocket. 3 consecutive transmembrane segments (helical) span residues 177-197 (QPTF…LLII), 205-225 (GELF…IEGM), and 235-255 (FRVS…IIIY).

Belongs to the Lgt family.

It is found in the cell membrane. It carries out the reaction L-cysteinyl-[prolipoprotein] + a 1,2-diacyl-sn-glycero-3-phospho-(1'-sn-glycerol) = an S-1,2-diacyl-sn-glyceryl-L-cysteinyl-[prolipoprotein] + sn-glycerol 1-phosphate + H(+). It participates in protein modification; lipoprotein biosynthesis (diacylglyceryl transfer). Functionally, catalyzes the transfer of the diacylglyceryl group from phosphatidylglycerol to the sulfhydryl group of the N-terminal cysteine of a prolipoprotein, the first step in the formation of mature lipoproteins. This Listeria monocytogenes serotype 4a (strain HCC23) protein is Phosphatidylglycerol--prolipoprotein diacylglyceryl transferase.